The following is a 291-amino-acid chain: Small ribosomal subunit protein uS2 (291 aa).

The interval 231 to 291 (NRGSGTTEAP…AAEAPAEDAK (61 aa)) is disordered. Residues 246–259 (EWERELLEGSKAEE) are compositionally biased toward basic and acidic residues. Positions 260 to 285 (AAAAAPAENAEAPAAPAAEAPAAAEA) are enriched in low complexity.

This sequence belongs to the universal ribosomal protein uS2 family.

This Pseudarthrobacter chlorophenolicus (strain ATCC 700700 / DSM 12829 / CIP 107037 / JCM 12360 / KCTC 9906 / NCIMB 13794 / A6) (Arthrobacter chlorophenolicus) protein is Small ribosomal subunit protein uS2.